A 485-amino-acid polypeptide reads, in one-letter code: 4-alpha-glucanotransferase (485 aa).

This sequence belongs to the disproportionating enzyme family.

The protein localises to the cytoplasm. It catalyses the reaction Transfers a segment of a (1-&gt;4)-alpha-D-glucan to a new position in an acceptor, which may be glucose or a (1-&gt;4)-alpha-D-glucan.. This chain is 4-alpha-glucanotransferase (malQ), found in Aquifex aeolicus (strain VF5).